The primary structure comprises 171 residues: Ribosome maturation factor RimM (171 aa).

Residues 96 to 170 enclose the PRC barrel domain; the sequence is AEGEYYYHEI…LVTIHVMEGL (75 aa).

Belongs to the RimM family. In terms of assembly, binds ribosomal protein uS19.

It localises to the cytoplasm. Functionally, an accessory protein needed during the final step in the assembly of 30S ribosomal subunit, possibly for assembly of the head region. Essential for efficient processing of 16S rRNA. May be needed both before and after RbfA during the maturation of 16S rRNA. It has affinity for free ribosomal 30S subunits but not for 70S ribosomes. This chain is Ribosome maturation factor RimM, found in Bacillus cereus (strain G9842).